Consider the following 276-residue polypeptide: A-factor receptor protein (276 aa).

The region spanning 8–68 (VQTWRSIVDA…AIMDEQTSTV (61 aa)) is the HTH tetR-type domain. Positions 31–50 (AISEILRRAKVTKGALYFHF) form a DNA-binding region, H-T-H motif. Positions 207-220 (EKAEREEQEARIAA) are enriched in basic and acidic residues. The tract at residues 207-276 (EKAEREEQEA…AGVAAGGVVA (70 aa)) is disordered. Residues 221-235 (EAKGAGSDAATDSGS) show a composition bias toward low complexity. The span at 236-257 (RSGGSGLRGGGSGRGPRAGGAG) shows a compositional bias: gly residues.

As to quaternary structure, homodimer or multimer. Binds to both DNA and A-factor as a homodimer.

The protein localises to the cytoplasm. Functionally, represses adpA expression by binding to the promoter region in the absence of A-factor, causing repression of streptomycin production and of sporulation. This chain is A-factor receptor protein (arpA), found in Streptomyces griseus.